The sequence spans 326 residues: S-methyl-5'-thioadenosine phosphorylase (326 aa).

Phosphate is bound by residues serine 44, arginine 86–histidine 87, and serine 119–alanine 120. Methionine 220 lines the substrate pocket. Residue threonine 221 participates in phosphate binding. Residue aspartate 244–aspartate 246 participates in substrate binding.

The protein belongs to the PNP/MTAP phosphorylase family. MTAP subfamily. In terms of assembly, homohexamer. Dimer of a homotrimer.

It carries out the reaction S-methyl-5'-thioadenosine + phosphate = 5-(methylsulfanyl)-alpha-D-ribose 1-phosphate + adenine. It participates in amino-acid biosynthesis; L-methionine biosynthesis via salvage pathway; S-methyl-5-thio-alpha-D-ribose 1-phosphate from S-methyl-5'-thioadenosine (phosphorylase route): step 1/1. In terms of biological role, catalyzes the reversible phosphorylation of S-methyl-5'-thioadenosine (MTA) to adenine and 5-methylthioribose-1-phosphate. Involved in the breakdown of MTA, a major by-product of polyamine biosynthesis. Responsible for the first step in the methionine salvage pathway after MTA has been generated from S-adenosylmethionine. Has broad substrate specificity with 6-aminopurine nucleosides as preferred substrates. The chain is S-methyl-5'-thioadenosine phosphorylase from Synechocystis sp. (strain PCC 6803 / GT-S).